Consider the following 364-residue polypeptide: tRNA 2-selenouridine synthase (364 aa).

Residues 14–137 (LIADTPIIDV…LRQTAIQATI (124 aa)) form the Rhodanese domain. Catalysis depends on Cys-97, which acts as the S-selanylcysteine intermediate.

It belongs to the SelU family. Monomer.

It catalyses the reaction 5-methylaminomethyl-2-thiouridine(34) in tRNA + selenophosphate + (2E)-geranyl diphosphate + H2O + H(+) = 5-methylaminomethyl-2-selenouridine(34) in tRNA + (2E)-thiogeraniol + phosphate + diphosphate. It carries out the reaction 5-methylaminomethyl-2-thiouridine(34) in tRNA + (2E)-geranyl diphosphate = 5-methylaminomethyl-S-(2E)-geranyl-thiouridine(34) in tRNA + diphosphate. The catalysed reaction is 5-methylaminomethyl-S-(2E)-geranyl-thiouridine(34) in tRNA + selenophosphate + H(+) = 5-methylaminomethyl-2-(Se-phospho)selenouridine(34) in tRNA + (2E)-thiogeraniol. The enzyme catalyses 5-methylaminomethyl-2-(Se-phospho)selenouridine(34) in tRNA + H2O = 5-methylaminomethyl-2-selenouridine(34) in tRNA + phosphate. Its function is as follows. Involved in the post-transcriptional modification of the uridine at the wobble position (U34) of tRNA(Lys), tRNA(Glu) and tRNA(Gln). Catalyzes the conversion of 2-thiouridine (S2U-RNA) to 2-selenouridine (Se2U-RNA). Acts in a two-step process involving geranylation of 2-thiouridine (S2U) to S-geranyl-2-thiouridine (geS2U) and subsequent selenation of the latter derivative to 2-selenouridine (Se2U) in the tRNA chain. The polypeptide is tRNA 2-selenouridine synthase (Shigella flexneri).